A 24-amino-acid polypeptide reads, in one-letter code: Brevinin-1Pd (24 aa).

Residues cysteine 18 and cysteine 24 are joined by a disulfide bond.

In terms of tissue distribution, expressed by the skin glands.

It is found in the secreted. Functionally, antibacterial activity against Gram-positive bacterium S.aureus and Gram-negative bacterium E.coli. Has activity against C.albicans. The chain is Brevinin-1Pd from Lithobates pipiens (Northern leopard frog).